Here is a 409-residue protein sequence, read N- to C-terminus: Phosphopentomutase (409 aa).

Mn(2+) is bound by residues aspartate 10, aspartate 308, histidine 313, aspartate 349, histidine 350, and histidine 361.

The protein belongs to the phosphopentomutase family. It depends on Mn(2+) as a cofactor.

It is found in the cytoplasm. It carries out the reaction 2-deoxy-alpha-D-ribose 1-phosphate = 2-deoxy-D-ribose 5-phosphate. The catalysed reaction is alpha-D-ribose 1-phosphate = D-ribose 5-phosphate. The protein operates within carbohydrate degradation; 2-deoxy-D-ribose 1-phosphate degradation; D-glyceraldehyde 3-phosphate and acetaldehyde from 2-deoxy-alpha-D-ribose 1-phosphate: step 1/2. Functionally, isomerase that catalyzes the conversion of deoxy-ribose 1-phosphate (dRib-1-P) and ribose 1-phosphate (Rib-1-P) to deoxy-ribose 5-phosphate (dRib-5-P) and ribose 5-phosphate (Rib-5-P), respectively. The protein is Phosphopentomutase of Buchnera aphidicola subsp. Schizaphis graminum (strain Sg).